The primary structure comprises 558 residues: MRKIRANAIAILTVAWILGTFYYLWQDNRAHAASSGGRGAQRAGRRSEQLREDRTIPLIVTGTPSKGFDEKAYLSAKQLKAGEDPYRQHAFNQLESDKLSPDRPIRDTRHYSCPSVSYSSDLPATSVIITFHNEARSTLLRTVKSVLNRTPANLIQEIILVDDFSSDPEDCLLLTRIPKVKCLRNDRREGLIRSRVRGADVAAATVLTFLDSHCEVNTEWLPPMLQRVKEDHTRVVSPIIDVISLDNFAYLAASADLRGGFDWSLHFKWEQIPLEQKMTRTDPTRPIRTPVIAGGIFVIDKSWFNHLGKYDAQMDIWGGENFELSFRVWMCGGSLEIVPCSRVGHVFRKRHPYNFPEGNALTYIRNTKRTAEVWMDEYKQYYYEARPSAIGKAFGSVATRIEQRKKMNCKSFRWYLENVYPELTVPVKEALPGIIKQGVNCLESQGQNTAGDFLLGMGICRGSAKNPQPAQAWLFSDHLIQQQGKCLAATSTLMSSPGSPVILQMCNPREGKQKWRRKGSFIQHSVSGLCLETKPAQLVTSKCQADAQAQQWQLLPHT.

Residues 1-6 (MRKIRA) are Cytoplasmic-facing. Residues 7–26 (NAIAILTVAWILGTFYYLWQ) traverse the membrane as a helical; Signal-anchor for type II membrane protein segment. Residues 27-558 (DNRAHAASSG…AQQWQLLPHT (532 aa)) are Lumenal-facing. Positions 33 to 54 (ASSGGRGAQRAGRRSEQLREDR) are disordered. The span at 45–54 (RRSEQLREDR) shows a compositional bias: basic and acidic residues. 5 disulfides stabilise this stretch: C113–C340, C331–C409, C441–C460, C486–C506, and C530–C543. The tract at residues 122–227 (LPATSVIITF…TEWLPPMLQR (106 aa)) is catalytic subdomain A. Residues D163 and R188 each coordinate substrate. Mn(2+) is bound at residue D211. S212 contacts substrate. H213 lines the Mn(2+) pocket. A catalytic subdomain B region spans residues 286-348 (PIRTPVIAGG…PCSRVGHVFR (63 aa)). A substrate-binding site is contributed by W317. H345 provides a ligand contact to Mn(2+). 3 residues coordinate substrate: R348, H351, and Y353. Positions 428–555 (KEALPGIIKQ…DAQAQQWQLL (128 aa)) constitute a Ricin B-type lectin domain.

The protein belongs to the glycosyltransferase 2 family. GalNAc-T subfamily. It depends on Mn(2+) as a cofactor.

Its subcellular location is the golgi apparatus membrane. The catalysed reaction is L-seryl-[protein] + UDP-N-acetyl-alpha-D-galactosamine = a 3-O-[N-acetyl-alpha-D-galactosaminyl]-L-seryl-[protein] + UDP + H(+). It carries out the reaction L-threonyl-[protein] + UDP-N-acetyl-alpha-D-galactosamine = a 3-O-[N-acetyl-alpha-D-galactosaminyl]-L-threonyl-[protein] + UDP + H(+). It participates in protein modification; protein glycosylation. Functionally, catalyzes the initial reaction in O-linked oligosaccharide biosynthesis, the transfer of an N-acetyl-D-galactosamine residue to a serine or threonine residue on the protein receptor. This is Polypeptide N-acetylgalactosaminyltransferase 16 (GALNT16) from Homo sapiens (Human).